We begin with the raw amino-acid sequence, 498 residues long: MSIFLCFLLLLPLSLIFLKKLLPSKGKLPPGPKGLPIIGNLHQFGRFLHKSLHKISQEYGPVMLLHFGVVPVIIVSSKEGAEEVLKTHDLETCSRPKTVGSGLFTYNFKDIGFAPYGENWREMRKIAVSELFSQKKLKSFRYIREDESQLLVRKVSKSALETPTSSVNLRKVIFTFAASIICRLSFGQNFCDFVDMETVEELVLESETNLGSLAFADFLPAGWIIDRISGQHSTVMKAFSKLTNFFELVIDDHLKSGKIEDHSDIISVMLDMINKPTEVGSYKVTDDHLKGLMSDVFLAGVNAGSITMIWTMTELSRHPRVMRKLQEEIRAALGPNKEKITEEDLEKVEYLKMVIEEAFRLHPPAPLLLPRLTMSDINIQGYSIPKNTMIQINTYTIGRDPKNWTKPDEFIPERFVDNPIEYKGQHFELLPFGAGRRVCPGMATGITIVELGLLSLLYFFDWSLPNGMTTKDIDMEEDGAFVIAKKVSLELVPTLHRW.

The helical transmembrane segment at 3–23 (IFLCFLLLLPLSLIFLKKLLP) threads the bilayer. Residue Cys439 coordinates heme.

It belongs to the cytochrome P450 family. The cofactor is heme.

It localises to the membrane. In Arabidopsis thaliana (Mouse-ear cress), this protein is Cytochrome P450 71B5 (CYP71B5).